Reading from the N-terminus, the 411-residue chain is Citrate synthase (411 aa).

Residues His-304 and Asp-363 contribute to the active site.

Belongs to the citrate synthase family.

The catalysed reaction is oxaloacetate + acetyl-CoA + H2O = citrate + CoA + H(+). It functions in the pathway carbohydrate metabolism; tricarboxylic acid cycle; isocitrate from oxaloacetate: step 1/2. This Rickettsia akari protein is Citrate synthase (gltA).